A 320-amino-acid polypeptide reads, in one-letter code: NAC domain-containing protein 20 (320 aa).

The NAC domain occupies 14-170; sequence LPPGFRFHPT…DWAVCRIFHK (157 aa). The DNA-binding element occupies 114–176; sequence IGMKKTLVFY…IFHKSSGIKK (63 aa).

In terms of assembly, forms homodimers. Forms heterodimers with NAC26. Expressed in developing seeds. Expressed in developing endosperm.

The protein localises to the nucleus. Its subcellular location is the endoplasmic reticulum. Transcription factor that acts redundantly with NAC26 to regulate the expression of genes involved in the biosynthesis of starch and storage proteins in grain. Directly binds to the promoters of starch synthase 1 (SS1), pullulanase (PUL), glutelin A1 (GLUA1), glutelins B4 and B5 (GLUB4 and GLUB5), alpha-globulin and 16 kDa prolamin, and activates their expression. This is NAC domain-containing protein 20 from Oryza sativa subsp. japonica (Rice).